Reading from the N-terminus, the 430-residue chain is Nucleoporin NUP42 (430 aa).

Residues 1 to 68 are disordered; the sequence is MSAFGNPFTS…AFGMPQFGTN (68 aa). The SXFG 1 repeat unit spans residues 2 to 5; the sequence is SAFG. Residues 15-36 are compositionally biased toward polar residues; the sequence is NLSNTSGINPFTNNAASTNNMG. 2 SAFGXPXFG repeats span residues 38–46 and 58–66; these read SAFGRPSFG and SAFGMPQFG. The span at 45-68 shows a compositional bias: low complexity; that stretch reads FGTANTMTGGTTTSAFGMPQFGTN. Residues 78–81 form an SXFG 2 repeat; sequence SAFG. SAFGXPXFG repeat units follow at residues 90 to 98 and 112 to 120; these read SAFGAPAFG and SAFGAPSFG. The interactions with CRM1 and GFD1 stretch occupies residues 121–230; the sequence is STGFGAMAAT…QNTSTSSGTG (110 aa). FG repeat units lie at residues 124–125 and 134–135; these read FG. Serine 137 bears the Phosphoserine mark. The stretch at 143-151 is one SAFGXPXFG 5 repeat; sequence SAFGQPAFG. SXFG repeat units follow at residues 168-171 and 182-185; these read SAFG and SPFG. The tract at residues 180 to 294 is disordered; the sequence is TTSPFGSLQQ…QSPFSGGSGG (115 aa). Positions 186-201 are enriched in low complexity; that stretch reads SLQQNASQNASSTSSA. One copy of the SAFGXPXFG 6 repeat lies at 200 to 208; the sequence is SAFGKPTFG. The segment covering 209–230 has biased composition (polar residues); sequence AATNTQSPFGTIQNTSTSSGTG. SXFG repeat units follow at residues 215–218 and 232–235; these read SPFG. Composition is skewed to polar residues over residues 237-252 and 260-285; these read FGTN…NLQS and PFGT…TNNQ. 2 SXFG repeats span residues 259–262 and 277–280; these read SPFG and SAFG. Residues 296 to 297 form an FG 3 repeat; that stretch reads FG. A Phosphoserine modification is found at serine 298. An SXFG 9 repeat occupies 312 to 315; the sequence is SSFG. 3 FG repeats span residues 319–322, 339–340, and 361–364; these read FSFG, FG, and FGFG. A disordered region spans residues 319 to 346; the sequence is FSFGITPQNDANKVSQSNPSFGQTMPNT. Over residues 323-346 the composition is skewed to polar residues; it reads ITPQNDANKVSQSNPSFGQTMPNT. Residues 365 to 430 form an interaction with GLE1 region; the sequence is QQQMNATNVN…DIPPPPALVA (66 aa).

As to quaternary structure, component of the nuclear pore complex (NPC). NPC constitutes the exclusive means of nucleocytoplasmic transport. NPCs allow the passive diffusion of ions and small molecules and the active, nuclear transport receptor-mediated bidirectional transport of macromolecules such as proteins, RNAs, ribonucleoparticles (RNPs), and ribosomal subunits across the nuclear envelope. Due to its 8-fold rotational symmetry, all subunits are present with 8 copies or multiples thereof. NUP42 interacts with the NUP82 subcomplex. It interacts directly with GLE1, and through its FG repeats with GFD1, the heterodimeric mRNA transport factor MEX67/MTR2, and the karyopherin CRM1.

It is found in the nucleus. The protein resides in the nuclear pore complex. The protein localises to the nucleus membrane. Functionally, functions as a component of the nuclear pore complex (NPC). NPC components, collectively referred to as nucleoporins (NUPs), can play the role of both NPC structural components and of docking or interaction partners for transiently associated nuclear transport factors. Active directional transport is assured by both, a Phe-Gly (FG) repeat affinity gradient for these transport factors across the NPC and a transport cofactor concentration gradient across the nuclear envelope (GSP1 and GSP2 GTPases associated predominantly with GTP in the nucleus, with GDP in the cytoplasm). NUP42 is specifically important for nuclear protein and mRNA export. This is Nucleoporin NUP42 (NUP42) from Saccharomyces cerevisiae (strain ATCC 204508 / S288c) (Baker's yeast).